The primary structure comprises 332 residues: Polyprenyl transferase yanG (332 aa).

A run of 8 helical transmembrane segments spans residues 42-62, 72-92, 145-165, 170-190, 200-220, 242-262, 266-286, and 300-320; these read IWGA…LAFA, VTAT…FFVV, PAVT…PFMK, FPQV…WVGV, ALPL…FYAT, VKIL…MTAL, LSLI…PWHV, and VFKA…LELV.

It belongs to the UbiA prenyltransferase family. The cofactor is Mg(2+).

The protein resides in the membrane. The protein operates within secondary metabolite biosynthesis; terpenoid biosynthesis. Polyprenyl transferase; part of the gene cluster that mediates the biosynthesis of yanuthone D, a fungal isoprenoid epoxycyclohexenone that acts as an antibiotic against fungi and bacteria. The first step of the pathway is the synthesis of 6-methylsalicylic acid (6-MSA) by the polyketide synthase yanA. 6-MSA is then converted to m-cresol by the decarboxylase yanB. The cytochrome P450 monooxygenase yanC then catalyzes the oxidation of m-cresol to toluquinol. Epoxidation of toluquinol is then performed by the short chain dehydrogenase yanD, with the help of yanE, and a further prenylation by yanG leads to 7-deacetoxyyanuthone A. The next step is the hydroxylation of C-22 of 7-deacetoxyyanuthone A by the cytochrome P450 monooxygenase yanH to yield 22-deacetylyanuthone A. O-Mevalon transferase yanI then attaches mevalon to the hydroxyl group of 22-deacetylyanuthone A to produce yanuthone E. Finally, the FAD-dependent monooxygenase yanF oxidizes the hydroxyl group at C15 of yanuthone E to form yanuthone D. Furthermore, several branching points in the pathway lead to the production of yanuthones F and G from 7-deacetoxyyanuthone A; yanuthones H and I from 22-deacetylyanuthone A; and yanuthone J from yanuthone E. YanG is also involved in the synthesis of yanuthone X1 which does not have 6-methylsalicylic acid (6-MSA) as precursor. The chain is Polyprenyl transferase yanG from Aspergillus niger (strain ATCC 1015 / CBS 113.46 / FGSC A1144 / LSHB Ac4 / NCTC 3858a / NRRL 328 / USDA 3528.7).